A 59-amino-acid chain; its full sequence is UPF0339 protein CC_2965 (59 aa).

The protein belongs to the UPF0339 family.

The protein is UPF0339 protein CC_2965 of Caulobacter vibrioides (strain ATCC 19089 / CIP 103742 / CB 15) (Caulobacter crescentus).